A 128-amino-acid chain; its full sequence is uncharacterized protein (128 aa).

The next 3 membrane-spanning stretches (helical) occupy residues 30–50 (ILFT…LGSS), 65–85 (VFRG…LGIQ), and 93–113 (WEVA…PDIV).

It is found in the cell membrane. This is an uncharacterized protein from Rickettsia prowazekii (strain Madrid E).